Consider the following 296-residue polypeptide: mRNA export factor rsm1 (296 aa).

The segment at 40 to 174 adopts a C3HC-type zinc-finger fold; it reads PWSREEFLRR…VSTHLPEEMT (135 aa).

Its subcellular location is the cytoplasm. The protein localises to the nucleus. In terms of biological role, involved in the export of mRNA from the nucleus to the cytoplasm. The chain is mRNA export factor rsm1 (rsm1) from Schizosaccharomyces pombe (strain 972 / ATCC 24843) (Fission yeast).